The primary structure comprises 375 residues: Putative fimbrium tip subunit Fim1C (375 aa).

Positions 1–16 (MKLLANIFLSGLAILA) are cleaved as a signal peptide. Cys-17 carries N-palmitoyl cysteine lipidation. A lipid anchor (S-diacylglycerol cysteine) is attached at Cys-17. Positions 17–47 (CVSCSKDEDPVLPLEGAKLSVAVKASGTATK) are excised as a propeptide.

Belongs to the bacteroidetes fimbrillin superfamily. FimA/Mfa1 family. In terms of assembly, may be part of the fimbrial tip.

Its subcellular location is the fimbrium. The protein localises to the cell outer membrane. Its function is as follows. Probably a component of the fimbrium tip. Fimbriae are filamentous appendages on the cell surface that mediate cell adhesion and biofilm formation. In Parabacteroides distasonis (strain ATCC 8503 / DSM 20701 / CIP 104284 / JCM 5825 / NCTC 11152), this protein is Putative fimbrium tip subunit Fim1C.